We begin with the raw amino-acid sequence, 61 residues long: Large ribosomal subunit protein uL30 (61 aa).

It belongs to the universal ribosomal protein uL30 family. As to quaternary structure, part of the 50S ribosomal subunit.

This chain is Large ribosomal subunit protein uL30, found in Treponema pallidum subsp. pallidum (strain SS14).